We begin with the raw amino-acid sequence, 271 residues long: Acyl-[acyl-carrier-protein]--UDP-N-acetylglucosamine O-acyltransferase (271 aa).

This sequence belongs to the transferase hexapeptide repeat family. LpxA subfamily. In terms of assembly, homotrimer.

The protein resides in the cytoplasm. It catalyses the reaction a (3R)-hydroxyacyl-[ACP] + UDP-N-acetyl-alpha-D-glucosamine = a UDP-3-O-[(3R)-3-hydroxyacyl]-N-acetyl-alpha-D-glucosamine + holo-[ACP]. It functions in the pathway glycolipid biosynthesis; lipid IV(A) biosynthesis; lipid IV(A) from (3R)-3-hydroxytetradecanoyl-[acyl-carrier-protein] and UDP-N-acetyl-alpha-D-glucosamine: step 1/6. In terms of biological role, involved in the biosynthesis of lipid A, a phosphorylated glycolipid that anchors the lipopolysaccharide to the outer membrane of the cell. This Agrobacterium fabrum (strain C58 / ATCC 33970) (Agrobacterium tumefaciens (strain C58)) protein is Acyl-[acyl-carrier-protein]--UDP-N-acetylglucosamine O-acyltransferase.